The sequence spans 79 residues: Acyl carrier protein (79 aa).

The region spanning S2–L77 is the Carrier domain. Residue S37 is modified to O-(pantetheine 4'-phosphoryl)serine.

This sequence belongs to the acyl carrier protein (ACP) family. 4'-phosphopantetheine is transferred from CoA to a specific serine of apo-ACP by AcpS. This modification is essential for activity because fatty acids are bound in thioester linkage to the sulfhydryl of the prosthetic group.

The protein localises to the cytoplasm. It participates in lipid metabolism; fatty acid biosynthesis. In terms of biological role, carrier of the growing fatty acid chain in fatty acid biosynthesis. This chain is Acyl carrier protein, found in Alkalilimnicola ehrlichii (strain ATCC BAA-1101 / DSM 17681 / MLHE-1).